Consider the following 377-residue polypeptide: 3-(aryl)acrylate reductase (377 aa).

FAD-binding positions include Phe-121 to Ser-130, Phe-154 to Thr-156, Arg-266, Gln-277, and Gln-334 to Gly-338. Glu-361 serves as the catalytic Proton acceptor. Thr-363–Glu-365 is an FAD binding site.

This sequence belongs to the acyl-CoA dehydrogenase family. It depends on FAD as a cofactor.

The enzyme catalyses 3-phenylpropanoate + oxidized [electron-transfer flavoprotein] + H(+) = (E)-cinnamate + reduced [electron-transfer flavoprotein]. The catalysed reaction is phloretate + oxidized [electron-transfer flavoprotein] + H(+) = (E)-4-coumarate + reduced [electron-transfer flavoprotein]. It carries out the reaction indole-3-propanoate + oxidized [electron-transfer flavoprotein] + H(+) = (E)-3-(indol-3-yl)acrylate + reduced [electron-transfer flavoprotein]. It functions in the pathway amino-acid degradation. Its function is as follows. Essential for the reductive metabolism of L-phenylalanine, L-tyrosine and L-tryptophan. Catalyzes the reduction of phenylacrylic acid to phenylpropionic acid, 4-hydroxy-phenylacrylic acid to 4-hydroxy-phenylpropionic acid, and indoleacrylic acid to indolepropionic acid. This Clostridium sporogenes (strain ATCC 15579) protein is 3-(aryl)acrylate reductase.